An 856-amino-acid chain; its full sequence is Beta-galactosidase 3 (856 aa).

Residues 1–31 (MREMGTGDSASRLILWFCLGFLILGVGFVQC) form the signal peptide. The active-site Proton donor is Glu189. Glu258 serves as the catalytic Nucleophile. N-linked (GlcNAc...) asparagine glycosylation is present at Asn468. Residues 760–846 (TFHRPKVHLK…KRLTVEAVCA (87 aa)) enclose the SUEL-type lectin domain.

Belongs to the glycosyl hydrolase 35 family. In terms of tissue distribution, ubiquitous.

The protein resides in the secreted. It is found in the extracellular space. It localises to the apoplast. The catalysed reaction is Hydrolysis of terminal non-reducing beta-D-galactose residues in beta-D-galactosides.. The protein is Beta-galactosidase 3 (BGAL3) of Arabidopsis thaliana (Mouse-ear cress).